A 1383-amino-acid polypeptide reads, in one-letter code: DNA-directed RNA polymerase subunit beta (1383 aa).

It belongs to the RNA polymerase beta chain family. The RNAP catalytic core consists of 2 alpha, 1 beta, 1 beta' and 1 omega subunit. When a sigma factor is associated with the core the holoenzyme is formed, which can initiate transcription.

It catalyses the reaction RNA(n) + a ribonucleoside 5'-triphosphate = RNA(n+1) + diphosphate. In terms of biological role, DNA-dependent RNA polymerase catalyzes the transcription of DNA into RNA using the four ribonucleoside triphosphates as substrates. This Bartonella henselae (strain ATCC 49882 / DSM 28221 / CCUG 30454 / Houston 1) (Rochalimaea henselae) protein is DNA-directed RNA polymerase subunit beta.